The primary structure comprises 122 residues: NADH-quinone oxidoreductase subunit A (122 aa).

3 helical membrane passes run 10 to 30 (MIVLIFLLLGILLPVVALTLG), 66 to 86 (IFALLFVIFDVETLFLYPWAV), and 91 to 111 (LGLFALIEMLIFVVMLLVGLA).

It belongs to the complex I subunit 3 family. NDH-1 is composed of 14 different subunits. Subunits NuoA, H, J, K, L, M, N constitute the membrane sector of the complex.

It localises to the cell membrane. It catalyses the reaction a quinone + NADH + 5 H(+)(in) = a quinol + NAD(+) + 4 H(+)(out). In terms of biological role, NDH-1 shuttles electrons from NADH, via FMN and iron-sulfur (Fe-S) centers, to quinones in the respiratory chain. The immediate electron acceptor for the enzyme in this species is believed to be a menaquinone. Couples the redox reaction to proton translocation (for every two electrons transferred, four hydrogen ions are translocated across the cytoplasmic membrane), and thus conserves the redox energy in a proton gradient. The polypeptide is NADH-quinone oxidoreductase subunit A (Bacillus anthracis).